We begin with the raw amino-acid sequence, 392 residues long: Methylthioribose-1-phosphate isomerase (392 aa).

The active-site Proton donor is aspartate 253.

This sequence belongs to the eIF-2B alpha/beta/delta subunits family. MtnA subfamily.

The protein localises to the cytoplasm. It is found in the nucleus. The enzyme catalyses 5-(methylsulfanyl)-alpha-D-ribose 1-phosphate = 5-(methylsulfanyl)-D-ribulose 1-phosphate. It participates in amino-acid biosynthesis; L-methionine biosynthesis via salvage pathway; L-methionine from S-methyl-5-thio-alpha-D-ribose 1-phosphate: step 1/6. Its function is as follows. Catalyzes the interconversion of methylthioribose-1-phosphate (MTR-1-P) into methylthioribulose-1-phosphate (MTRu-1-P). This chain is Methylthioribose-1-phosphate isomerase (mri1), found in Pyrenophora tritici-repentis (strain Pt-1C-BFP) (Wheat tan spot fungus).